Reading from the N-terminus, the 338-residue chain is mRNA decay activator protein ZFP36L1 (338 aa).

The tract at residues 1–111 (MTTTLVSATI…QKQPGSGQVN (111 aa)) is necessary and sufficient for the association with mRNA decay enzymes and mRNA decay activation. The residue at position 54 (S54) is a Phosphoserine; by MAPKAPK2. The interval 71–113 (LKGEPAPSLSSRDSRFRDRSFSEGGERLLPTQKQPGSGQVNSS) is disordered. Positions 82–96 (RDSRFRDRSFSEGGE) are enriched in basic and acidic residues. The residue at position 90 (S90) is a Phosphoserine; by PKB/AKT1. Phosphoserine; by PKB/AKT1 and MAPKAPK2 is present on S92. Positions 101–113 (TQKQPGSGQVNSS) are enriched in polar residues. 2 C3H1-type zinc fingers span residues 114-142 (RYKTELCRPFEENGACKYGDKCQFAHGIH) and 152-180 (KYKTELCRTFHTIGFCPYGPRCHFIHNAE). Residues 185–338 (LAGGRDLSAD…IFSRLSISDD (154 aa)) are necessary for mRNA decay activation. S203 carries the post-translational modification Phosphoserine; by PKB/AKT1 and MAPKAPK2. The disordered stretch occupies residues 273–338 (SPTTFLFRPM…IFSRLSISDD (66 aa)). Positions 305–318 (YLSSSSSSHSGSDS) are enriched in low complexity. A Phosphoserine modification is found at S318. Position 334 is a phosphoserine; by RPS6KA1 (S334).

In terms of assembly, associates with the cytoplasmic CCR4-NOT deadenylase and RNA exosome complexes to trigger ARE-containing mRNA deadenylation and decay processes. Interacts with CNOT1. Interacts (via N-terminus) with CNOT6. Interacts with CNOT7; this interaction is inhibited in response to phorbol 12-myristate 13-acetate (PMA) treatment in a p38 MAPK-dependent manner. Interacts with DCP1A. Interacts (via N-terminus) with DCP2. Interacts (via N-terminus) with EXOSC2. Interacts with XRN1. Interacts (via phosphorylated form) with YWHAB; this interaction occurs in a protein kinase AKT1-dependent manner. Interacts (via phosphorylated form) with YWHAZ; this interaction occurs in a p38 MAPK- and AKT-signaling pathways. In terms of processing, phosphorylated. Phosphorylated by RPS6KA1 at Ser-334 upon phorbol 12-myristate 13-acetate (PMA) treatment; this phosphorylation results in dissociation of the CCR4-NOT deadenylase complex and induces p38 MAPK-mediated stabilization of the low-density lipoprotein receptor LDLR mRNA. Phosphorylated by protein kinase AKT1 at Ser-92 and Ser-203 in response to insulin; these phosphorylations stabilize ZFP36L1, increase the association with 14-3-3 proteins and mediate ARE-containing mRNA stabilization. AKT1-mediated phosphorylation at Ser-92 does not impair ARE-containing RNA-binding. Phosphorylated at Ser-54, Ser-92 and Ser-203 by MAPKAPK2; these phosphorylations increase the association with 14-3-3 proteins and mediate ARE-containing mRNA stabilization in a protein kinase AKT1-independent manner. MAPKAPK2-mediated phosphorylations at Ser-54, Ser-92 and Ser-203 do not impair ARE-containing RNA-binding. Phosphorylations increase the association with 14-3-3 proteins and mediate ARE-containing mRNA stabilization during early adipogenesis in a p38 MAPK- and AKT-dependent manner. Ubiquitinated. Ubiquitination leads to proteasomal degradation, a process inhibited by phosphorylations at Ser-90, Ser-92 and Ser-203. In terms of tissue distribution, expressed in preadipocytes and adipocytes. Expressed in the proximal and distal tubules in the renal cortex (at protein level). Expressed in ovary, heart, kidney, lung, spleen and thymus. Weakly expressed in brain, liver and testis. Expressed in osteoblasts. Expressed in embryonic stem cells (ESCs). Expressed through B lymphocyte development.

The protein resides in the nucleus. Its subcellular location is the cytoplasm. It is found in the cytoplasmic granule. It localises to the P-body. Zinc-finger RNA-binding protein that destabilizes several cytoplasmic AU-rich element (ARE)-containing mRNA transcripts by promoting their poly(A) tail removal or deadenylation, and hence provide a mechanism for attenuating protein synthesis. Acts as a 3'-untranslated region (UTR) ARE mRNA-binding adapter protein to communicate signaling events to the mRNA decay machinery. Functions by recruiting the CCR4-NOT deadenylating complex and components of the cytoplasmic RNA decay machinery to the bound ARE-containing mRNAs, and hence promotes ARE-mediated mRNA deadenylation and decay processes. Also induces the degradation of ARE-containing mRNAs even in absence of poly(A) tail. Binds to 3'-UTR ARE of numerous mRNAs. Positively regulates early adipogenesis by promoting ARE-mediated mRNA decay of immediate early genes (IEGs). Promotes ARE-mediated mRNA decay of mineralocorticoid receptor NR3C2 mRNA in response to hypertonic stress. Negatively regulates hematopoietic/erythroid cell differentiation by promoting ARE-mediated mRNA decay of the transcription factor STAT5B mRNA. Positively regulates monocyte/macrophage cell differentiation by promoting ARE-mediated mRNA decay of the cyclin-dependent kinase CDK6 mRNA. Promotes degradation of ARE-containing pluripotency-associated mRNAs in embryonic stem cells (ESCs), such as NANOG, through a fibroblast growth factor (FGF)-induced MAPK-dependent signaling pathway, and hence attenuates ESC self-renewal and positively regulates mesendoderm differentiation. May play a role in mediating pro-apoptotic effects in malignant B-cells by promoting ARE-mediated mRNA decay of BCL2 mRNA. In association with ZFP36L2 maintains quiescence on developing B lymphocytes by promoting ARE-mediated decay of several mRNAs encoding cell cycle regulators that help B cells progress through the cell cycle, and hence ensuring accurate variable-diversity-joining (VDJ) recombination and functional immune cell formation. Together with ZFP36L2 is also necessary for thymocyte development and prevention of T-cell acute lymphoblastic leukemia (T-ALL) transformation by promoting ARE-mediated mRNA decay of the oncogenic transcription factor NOTCH1 mRNA. Involved in the delivery of target ARE-mRNAs to processing bodies (PBs). In addition to its cytosolic mRNA-decay function, plays a role in the regulation of nuclear mRNA 3'-end processing; modulates mRNA 3'-end maturation efficiency of the DLL4 mRNA through binding with an ARE embedded in a weak noncanonical polyadenylation (poly(A)) signal in endothelial cells. Also involved in the regulation of stress granule (SG) and P-body (PB) formation and fusion. Plays a role in vasculogenesis and endocardial development. Involved in the regulation of keratinocyte proliferation, differentiation and apoptosis. Plays a role in myoblast cell differentiation. This is mRNA decay activator protein ZFP36L1 from Mus musculus (Mouse).